Consider the following 906-residue polypeptide: Protein translocase subunit SecA (906 aa).

ATP contacts are provided by residues Gln-89, 107 to 111, and Asp-502; that span reads GEGKT. A disordered region spans residues 829–898; the sequence is EAPPEPELPP…ACPCGSGKKY (70 aa). Residues 858–877 show a composition bias toward basic and acidic residues; the sequence is WSDHQHDERNVPAAERDPAD. The Zn(2+) site is built by Cys-890, Cys-892, Cys-901, and His-902.

The protein belongs to the SecA family. Monomer and homodimer. Part of the essential Sec protein translocation apparatus which comprises SecA, SecYEG and auxiliary proteins SecDF-YajC and YidC. Zn(2+) serves as cofactor.

It localises to the cell inner membrane. It is found in the cytoplasm. The enzyme catalyses ATP + H2O + cellular proteinSide 1 = ADP + phosphate + cellular proteinSide 2.. Functionally, part of the Sec protein translocase complex. Interacts with the SecYEG preprotein conducting channel. Has a central role in coupling the hydrolysis of ATP to the transfer of proteins into and across the cell membrane, serving both as a receptor for the preprotein-SecB complex and as an ATP-driven molecular motor driving the stepwise translocation of polypeptide chains across the membrane. The chain is Protein translocase subunit SecA from Brucella anthropi (strain ATCC 49188 / DSM 6882 / CCUG 24695 / JCM 21032 / LMG 3331 / NBRC 15819 / NCTC 12168 / Alc 37) (Ochrobactrum anthropi).